We begin with the raw amino-acid sequence, 141 residues long: Plasmatocyte-spreading peptide (141 aa).

The signal sequence occupies residues 1–22; the sequence is MKLTINILFCLILISQYNSANG. Residues 23-118 constitute a propeptide that is removed on maturation; it reads NLRDLFNNVR…ATGGKDDKGR (96 aa). Residues 46-58 show a composition bias toward basic and acidic residues; sequence VKTLFHPSDKSGN. A disordered region spans residues 46–118; the sequence is VKTLFHPSDK…ATGGKDDKGR (73 aa). Residues 83–98 are compositionally biased toward low complexity; it reads PVAVTPAPVVSTTTQA. Over residues 99–108 the composition is skewed to polar residues; it reads SAPTVATNGT. Cys125 and Cys137 are oxidised to a cystine.

The protein belongs to the GBP/PSP1/paralytic peptide family.

Functionally, mediates the spreading of plasmatocytes to foreign surfaces. Plasmocytes are a class of hemocytes involved in insect cellular immunity. The polypeptide is Plasmatocyte-spreading peptide (PSP1) (Chrysodeixis includens (Soybean looper)).